The following is a 428-amino-acid chain: Lupus La protein homolog A (428 aa).

Positions 7 to 99 (KEQKLDSDTK…RRSPAKPLPE (93 aa)) constitute an HTH La-type RNA-binding domain. One can recognise an RRM domain in the interval 111–203 (KSVYIKGFPT…EERKLNKSEE (93 aa)). Disordered stretches follow at residues 187–223 (EYHAKKNEERKLNKSEEKAKSKQVKKEAQKQAEDAER) and 323–428 (QESF…VGDQ). 2 consecutive short sequence motifs (nuclear localization signal) follow at residues 196 to 212 (RKLNKSEEKAKSKQVKK) and 316 to 332 (KKILEGKQESFNKRKGR). A xRRM domain is found at 227 to 349 (EERVGSLLKF…KGRGGKGNDS (123 aa)). Composition is skewed to basic residues over residues 328–343 (KRKGRDGRKFKGKGRG) and 352–361 (RKRTQFQGKK). The segment covering 366-377 (SSDDEDDMEESE) has biased composition (acidic residues). Residues 406-428 (RSLDDKAEDGPAVKQSKTEVGDQ) are compositionally biased toward basic and acidic residues.

Phosphorylated.

It localises to the nucleus. La protein plays a role in the transcription of RNA polymerase III. It is most probably a transcription termination factor. Binds to the 3' termini of virtually all nascent polymerase III transcripts. The protein is Lupus La protein homolog A (ssb-a) of Xenopus laevis (African clawed frog).